Consider the following 459-residue polypeptide: Glutamate--tRNA ligase 2 (459 aa).

The 'HIGH' region signature appears at 8 to 18 (PSPTGYLHIGG). A 'KMSKS' region motif is present at residues 237–241 (KLSKR). Lys-240 contacts ATP.

The protein belongs to the class-I aminoacyl-tRNA synthetase family. Glutamate--tRNA ligase type 1 subfamily. As to quaternary structure, monomer.

The protein resides in the cytoplasm. It catalyses the reaction tRNA(Glu) + L-glutamate + ATP = L-glutamyl-tRNA(Glu) + AMP + diphosphate. Its function is as follows. Catalyzes the attachment of glutamate to tRNA(Glu) in a two-step reaction: glutamate is first activated by ATP to form Glu-AMP and then transferred to the acceptor end of tRNA(Glu). The sequence is that of Glutamate--tRNA ligase 2 from Campylobacter concisus (strain 13826).